Reading from the N-terminus, the 466-residue chain is Histidine--tRNA ligase (466 aa).

This sequence belongs to the class-II aminoacyl-tRNA synthetase family. As to quaternary structure, homodimer.

The protein resides in the cytoplasm. It catalyses the reaction tRNA(His) + L-histidine + ATP = L-histidyl-tRNA(His) + AMP + diphosphate + H(+). In Xylella fastidiosa (strain M12), this protein is Histidine--tRNA ligase.